Reading from the N-terminus, the 151-residue chain is Transcription antitermination protein NusB (151 aa).

The protein belongs to the NusB family.

Functionally, involved in transcription antitermination. Required for transcription of ribosomal RNA (rRNA) genes. Binds specifically to the boxA antiterminator sequence of the ribosomal RNA (rrn) operons. In Hamiltonella defensa subsp. Acyrthosiphon pisum (strain 5AT), this protein is Transcription antitermination protein NusB.